The following is a 148-amino-acid chain: Large ribosomal subunit protein bL9 (148 aa).

The protein belongs to the bacterial ribosomal protein bL9 family.

Its function is as follows. Binds to the 23S rRNA. The chain is Large ribosomal subunit protein bL9 from Listeria welshimeri serovar 6b (strain ATCC 35897 / DSM 20650 / CCUG 15529 / CIP 8149 / NCTC 11857 / SLCC 5334 / V8).